The chain runs to 211 residues: Uracil phosphoribosyltransferase (211 aa).

Residues Arg-77, Arg-102, and Asp-129 to Ser-137 contribute to the 5-phospho-alpha-D-ribose 1-diphosphate site. Uracil contacts are provided by residues Ile-192 and Gly-197 to Ala-199. Asp-198 serves as a coordination point for 5-phospho-alpha-D-ribose 1-diphosphate.

This sequence belongs to the UPRTase family. The cofactor is Mg(2+).

It catalyses the reaction UMP + diphosphate = 5-phospho-alpha-D-ribose 1-diphosphate + uracil. Its pathway is pyrimidine metabolism; UMP biosynthesis via salvage pathway; UMP from uracil: step 1/1. Its activity is regulated as follows. Allosterically activated by GTP. Functionally, catalyzes the conversion of uracil and 5-phospho-alpha-D-ribose 1-diphosphate (PRPP) to UMP and diphosphate. The chain is Uracil phosphoribosyltransferase from Corynebacterium diphtheriae (strain ATCC 700971 / NCTC 13129 / Biotype gravis).